The sequence spans 425 residues: Trigger factor (425 aa).

Positions 163–248 (GDTAVIDFEG…VHEIKTKELP (86 aa)) constitute a PPIase FKBP-type domain.

The protein belongs to the FKBP-type PPIase family. Tig subfamily.

Its subcellular location is the cytoplasm. It catalyses the reaction [protein]-peptidylproline (omega=180) = [protein]-peptidylproline (omega=0). Functionally, involved in protein export. Acts as a chaperone by maintaining the newly synthesized protein in an open conformation. Functions as a peptidyl-prolyl cis-trans isomerase. This Bacillus cereus (strain ATCC 10987 / NRS 248) protein is Trigger factor.